The primary structure comprises 282 residues: Putative 1-acyl-sn-glycerol-3-phosphate acyltransferase acl-2 (282 aa).

2 helical membrane passes run 4-24 (FWSI…NIST) and 32-52 (ISFY…TMIP). The HXXXXD motif signature appears at 98 to 103 (HQSSLD). The helical transmembrane segment at 122–142 (ILAYVPFFNLGAYFSNTIFID) threads the bilayer.

Belongs to the 1-acyl-sn-glycerol-3-phosphate acyltransferase family.

It localises to the membrane. The catalysed reaction is a 1-acyl-sn-glycero-3-phosphate + an acyl-CoA = a 1,2-diacyl-sn-glycero-3-phosphate + CoA. Its pathway is phospholipid metabolism; CDP-diacylglycerol biosynthesis; CDP-diacylglycerol from sn-glycerol 3-phosphate: step 2/3. In terms of biological role, converts lysophosphatidic acid (LPA) into phosphatidic acid by incorporating an acyl moiety at the sn-2 position of the glycerol backbone. The protein is Putative 1-acyl-sn-glycerol-3-phosphate acyltransferase acl-2 (acl-2) of Caenorhabditis elegans.